We begin with the raw amino-acid sequence, 253 residues long: UPF0758 protein Bxeno_A3578 (253 aa).

Residues Leu-131–Pro-253 form the MPN domain. Residues His-202, His-204, and Asp-215 each coordinate Zn(2+). The JAMM motif signature appears at His-202 to Asp-215.

Belongs to the UPF0758 family.

The polypeptide is UPF0758 protein Bxeno_A3578 (Paraburkholderia xenovorans (strain LB400)).